The sequence spans 80 residues: Exodeoxyribonuclease 7 small subunit (80 aa).

Belongs to the XseB family. As to quaternary structure, heterooligomer composed of large and small subunits.

The protein localises to the cytoplasm. It carries out the reaction Exonucleolytic cleavage in either 5'- to 3'- or 3'- to 5'-direction to yield nucleoside 5'-phosphates.. Its function is as follows. Bidirectionally degrades single-stranded DNA into large acid-insoluble oligonucleotides, which are then degraded further into small acid-soluble oligonucleotides. This Shigella sonnei (strain Ss046) protein is Exodeoxyribonuclease 7 small subunit.